The following is a 178-amino-acid chain: Large ribosomal subunit protein uL6 (178 aa).

It belongs to the universal ribosomal protein uL6 family. Part of the 50S ribosomal subunit.

In terms of biological role, this protein binds to the 23S rRNA, and is important in its secondary structure. It is located near the subunit interface in the base of the L7/L12 stalk, and near the tRNA binding site of the peptidyltransferase center. This chain is Large ribosomal subunit protein uL6, found in Francisella philomiragia subsp. philomiragia (strain ATCC 25017 / CCUG 19701 / FSC 153 / O#319-036).